A 570-amino-acid chain; its full sequence is Sulfite reductase [NADPH] hemoprotein beta-component (570 aa).

[4Fe-4S] cluster is bound by residues C434, C440, C479, and C483. Siroheme is bound at residue C483.

This sequence belongs to the nitrite and sulfite reductase 4Fe-4S domain family. In terms of assembly, alpha(8)-beta(8). The alpha component is a flavoprotein, the beta component is a hemoprotein. The cofactor is siroheme. Requires [4Fe-4S] cluster as cofactor.

The catalysed reaction is hydrogen sulfide + 3 NADP(+) + 3 H2O = sulfite + 3 NADPH + 4 H(+). The protein operates within sulfur metabolism; hydrogen sulfide biosynthesis; hydrogen sulfide from sulfite (NADPH route): step 1/1. Component of the sulfite reductase complex that catalyzes the 6-electron reduction of sulfite to sulfide. This is one of several activities required for the biosynthesis of L-cysteine from sulfate. This chain is Sulfite reductase [NADPH] hemoprotein beta-component, found in Salmonella schwarzengrund (strain CVM19633).